A 1899-amino-acid chain; its full sequence is Protein TIC 214 (1899 aa).

A run of 6 helical transmembrane segments spans residues 23–43 (VVVG…SYLF), 64–84 (FITG…HLAL), 87–107 (PHTI…WNNH), 124–144 (LSIQ…LFIL), 172–192 (VGWL…LVCI), and 217–237 (WTAR…LGVH). Disordered stretches follow at residues 256–280 (EQKK…TKKE) and 1581–1619 (PKDY…GLDL). The segment covering 269–280 (EKTFETKETKKE) has biased composition (basic and acidic residues).

This sequence belongs to the TIC214 family. As to quaternary structure, part of the Tic complex.

It localises to the plastid. Its subcellular location is the chloroplast inner membrane. Involved in protein precursor import into chloroplasts. May be part of an intermediate translocation complex acting as a protein-conducting channel at the inner envelope. This chain is Protein TIC 214, found in Ceratophyllum demersum (Rigid hornwort).